The chain runs to 98 residues: Large ribosomal subunit protein bL28 (98 aa).

This sequence belongs to the bacterial ribosomal protein bL28 family.

The sequence is that of Large ribosomal subunit protein bL28 from Bartonella bacilliformis (strain ATCC 35685 / KC583 / Herrer 020/F12,63).